The chain runs to 337 residues: Putative NAC domain-containing protein 94 (337 aa).

The region spanning 20-191 (VLPGFRFHPT…AWAICRIFKK (172 aa)) is the NAC domain.

It localises to the nucleus. This is Putative NAC domain-containing protein 94 (ANAC094) from Arabidopsis thaliana (Mouse-ear cress).